The following is a 134-amino-acid chain: UPF0357 protein YCL012C (134 aa).

The signal sequence occupies residues 1-23 (MKSLFYLKLLLWVVLLSLCLLMA). A phosphoserine mark is found at Ser71 and Ser74. Residue Lys86 forms a Glycyl lysine isopeptide (Lys-Gly) (interchain with G-Cter in ubiquitin) linkage.

This sequence belongs to the UPF0357 family.

The chain is UPF0357 protein YCL012C from Saccharomyces cerevisiae (strain ATCC 204508 / S288c) (Baker's yeast).